We begin with the raw amino-acid sequence, 147 residues long: MNNPDDVLLINRFLRQQHVLTLCAGSGMDMWCASCFYVFDENQMALFLMTEKHTRHSELMLINPQVAGTVATQSRTIALIKGIQYRGDISLLSGDAEQAARNRYCRRFPVAKVSSAPLWQLNLLEIKMTNNALGFGKKLHWSRVEPL.

The protein belongs to the UPF0306 family.

The chain is UPF0306 protein YPTB0506 from Yersinia pseudotuberculosis serotype I (strain IP32953).